The following is an 80-amino-acid chain: Cytochrome c oxidase subunit 7B, mitochondrial (80 aa).

Residues Met1–Gln24 constitute a mitochondrion transit peptide. At Ser25–Thr32 the chain is on the mitochondrial matrix side. A helical membrane pass occupies residues Phe33–Gln59. At Ile60 to Gln80 the chain is on the mitochondrial intermembrane side.

The protein belongs to the cytochrome c oxidase VIIb family. In terms of assembly, component of the cytochrome c oxidase (complex IV, CIV), a multisubunit enzyme composed of 14 subunits. The complex is composed of a catalytic core of 3 subunits MT-CO1, MT-CO2 and MT-CO3, encoded in the mitochondrial DNA, and 11 supernumerary subunits COX4I, COX5A, COX5B, COX6A, COX6B, COX6C, COX7A, COX7B, COX7C, COX8 and NDUFA4, which are encoded in the nuclear genome. The complex exists as a monomer or a dimer and forms supercomplexes (SCs) in the inner mitochondrial membrane with NADH-ubiquinone oxidoreductase (complex I, CI) and ubiquinol-cytochrome c oxidoreductase (cytochrome b-c1 complex, complex III, CIII), resulting in different assemblies (supercomplex SCI(1)III(2)IV(1) and megacomplex MCI(2)III(2)IV(2)).

It localises to the mitochondrion inner membrane. The protein operates within energy metabolism; oxidative phosphorylation. Component of the cytochrome c oxidase, the last enzyme in the mitochondrial electron transport chain which drives oxidative phosphorylation. The respiratory chain contains 3 multisubunit complexes succinate dehydrogenase (complex II, CII), ubiquinol-cytochrome c oxidoreductase (cytochrome b-c1 complex, complex III, CIII) and cytochrome c oxidase (complex IV, CIV), that cooperate to transfer electrons derived from NADH and succinate to molecular oxygen, creating an electrochemical gradient over the inner membrane that drives transmembrane transport and the ATP synthase. Cytochrome c oxidase is the component of the respiratory chain that catalyzes the reduction of oxygen to water. Electrons originating from reduced cytochrome c in the intermembrane space (IMS) are transferred via the dinuclear copper A center (CU(A)) of subunit 2 and heme A of subunit 1 to the active site in subunit 1, a binuclear center (BNC) formed by heme A3 and copper B (CU(B)). The BNC reduces molecular oxygen to 2 water molecules using 4 electrons from cytochrome c in the IMS and 4 protons from the mitochondrial matrix. Plays a role in proper central nervous system (CNS) development in vertebrates. The polypeptide is Cytochrome c oxidase subunit 7B, mitochondrial (Cox7b) (Rattus norvegicus (Rat)).